The chain runs to 1161 residues: PAN2-PAN3 deadenylation complex catalytic subunit pan2 (1161 aa).

WD repeat units follow at residues G20–S59 and A276–E315. The segment at M316–D452 is linker. The USP domain maps to D453–K822. The Exonuclease domain occupies V871–L1049. The a divalent metal cation site is built by D874, E876, D983, and D1042. The stretch at N1009 to G1060 is one WD 4 repeat. The interval R1092–K1161 is disordered. Residues V1097 to T1110 show a composition bias toward polar residues. A compositionally biased stretch (low complexity) spans A1116–P1129. Positions T1145 to F1155 are enriched in gly residues.

The protein belongs to the peptidase C19 family. PAN2 subfamily. Forms a heterotrimer with an asymmetric homodimer of the regulatory subunit pan3 to form the poly(A)-nuclease (PAN) deadenylation complex. It depends on a divalent metal cation as a cofactor.

It is found in the cytoplasm. The catalysed reaction is Exonucleolytic cleavage of poly(A) to 5'-AMP.. With respect to regulation, positively regulated by the regulatory subunit pan3. Its function is as follows. Catalytic subunit of the poly(A)-nuclease (PAN) deadenylation complex, one of two cytoplasmic mRNA deadenylases involved in mRNA turnover. PAN specifically shortens poly(A) tails of RNA and the activity is stimulated by poly(A)-binding protein pab1. PAN deadenylation is followed by rapid degradation of the shortened mRNA tails by the CCR4-NOT complex. Deadenylated mRNAs are then degraded by two alternative mechanisms, namely exosome-mediated 3'-5' exonucleolytic degradation, or deadenylation-dependent mRNA decaping and subsequent 5'-3' exonucleolytic degradation by xrn1. May also be involved in post-transcriptional maturation of mRNA poly(A) tails. This is PAN2-PAN3 deadenylation complex catalytic subunit pan2 from Neosartorya fischeri (strain ATCC 1020 / DSM 3700 / CBS 544.65 / FGSC A1164 / JCM 1740 / NRRL 181 / WB 181) (Aspergillus fischerianus).